The sequence spans 163 residues: CASP-like protein 1C3 (163 aa).

The Cytoplasmic segment spans residues Met-1–Lys-6. The helical transmembrane segment at Ile-7–Met-27 threads the bilayer. Topologically, residues Val-28–Lys-52 are extracellular. Asn-38 carries an N-linked (GlcNAc...) asparagine glycan. Residues Tyr-53–Phe-73 form a helical membrane-spanning segment. Residues Lys-74 to Arg-79 lie on the Cytoplasmic side of the membrane. A helical transmembrane segment spans residues Leu-80–Leu-100. Over Ala-101–Gln-128 the chain is Extracellular. The chain crosses the membrane as a helical span at residues Val-129–Cys-149. At Ser-150 to Pro-163 the chain is on the cytoplasmic side.

This sequence belongs to the Casparian strip membrane proteins (CASP) family. In terms of assembly, homodimer and heterodimers.

Its subcellular location is the cell membrane. The sequence is that of CASP-like protein 1C3 from Populus trichocarpa (Western balsam poplar).